Here is a 309-residue protein sequence, read N- to C-terminus: Probable 3-hydroxyacyl-CoA dehydrogenase B0272.3 (309 aa).

This sequence belongs to the 3-hydroxyacyl-CoA dehydrogenase family. Homodimer.

The protein resides in the mitochondrion matrix. The enzyme catalyses a (3S)-3-hydroxyacyl-CoA + NAD(+) = a 3-oxoacyl-CoA + NADH + H(+). It functions in the pathway lipid metabolism; fatty acid beta-oxidation. This is Probable 3-hydroxyacyl-CoA dehydrogenase B0272.3 from Caenorhabditis elegans.